The primary structure comprises 69 residues: Cytochrome c oxidase subunit 8A, mitochondrial (69 aa).

The transit peptide at 1 to 25 directs the protein to the mitochondrion; the sequence is MSVLTPLLLRGLTGPARRLPVPRAQ. The short motif at 2 to 19 is the SIFI-degron element; the sequence is SVLTPLLLRGLTGPARRL. Over 26-36 the chain is Mitochondrial matrix; sequence IHSKPPREQLG. The helical transmembrane segment at 37–60 threads the bilayer; that stretch reads TMDIAIGLTSCFLCFLLPSGWVLS. At 61 to 69 the chain is on the mitochondrial intermembrane side; it reads HMENYKKRE.

This sequence belongs to the cytochrome c oxidase VIII family. Component of the cytochrome c oxidase (complex IV, CIV), a multisubunit enzyme composed of 14 subunits. The complex is composed of a catalytic core of 3 subunits MT-CO1, MT-CO2 and MT-CO3, encoded in the mitochondrial DNA, and 11 supernumerary subunits COX4I1 (or COX4I2), COX5A, COX5B, COX6A2 (or COX6A1), COX6B1 (or COX6B2), COX6C, COX7A1 (or COX7A2), COX7B, COX7C, COX8B and NDUFA4, which are encoded in the nuclear genome. The complex exists as a monomer or a dimer and forms supercomplexes (SCs) in the inner mitochondrial membrane with NADH-ubiquinone oxidoreductase (complex I, CI) and ubiquinol-cytochrome c oxidoreductase (cytochrome b-c1 complex, complex III, CIII), resulting in different assemblies (supercomplex SCI(1)III(2)IV(1) and megacomplex MCI(2)III(2)IV(2)). Post-translationally, in response to mitochondrial stress, the precursor protein is ubiquitinated by the SIFI complex in the cytoplasm before mitochondrial import, leading to its degradation. Within the SIFI complex, UBR4 initiates ubiquitin chain that are further elongated or branched by KCMF1.

It localises to the mitochondrion inner membrane. It functions in the pathway energy metabolism; oxidative phosphorylation. Its function is as follows. Component of the cytochrome c oxidase, the last enzyme in the mitochondrial electron transport chain which drives oxidative phosphorylation. The respiratory chain contains 3 multisubunit complexes succinate dehydrogenase (complex II, CII), ubiquinol-cytochrome c oxidoreductase (cytochrome b-c1 complex, complex III, CIII) and cytochrome c oxidase (complex IV, CIV), that cooperate to transfer electrons derived from NADH and succinate to molecular oxygen, creating an electrochemical gradient over the inner membrane that drives transmembrane transport and the ATP synthase. Cytochrome c oxidase is the component of the respiratory chain that catalyzes the reduction of oxygen to water. Electrons originating from reduced cytochrome c in the intermembrane space (IMS) are transferred via the dinuclear copper A center (CU(A)) of subunit 2 and heme A of subunit 1 to the active site in subunit 1, a binuclear center (BNC) formed by heme A3 and copper B (CU(B)). The BNC reduces molecular oxygen to 2 water molecules using 4 electrons from cytochrome c in the IMS and 4 protons from the mitochondrial matrix. The sequence is that of Cytochrome c oxidase subunit 8A, mitochondrial (COX8A) from Bos taurus (Bovine).